Consider the following 276-residue polypeptide: Putative pyridoxine kinase (276 aa).

Asn139 contributes to the ATP binding site. Glu142 serves as a coordination point for Mg(2+). Residues 176-180 (KGGKA), Asp188, Gly213, and Lys238 contribute to the ATP site.

It belongs to the ThiD family.

The enzyme catalyses pyridoxal + ATP = pyridoxal 5'-phosphate + ADP + H(+). In terms of biological role, phosphorylates B6 vitamers; functions in a salvage pathway. Uses pyridoxal, pyridoxine, and pyridoxamine as substrates. The chain is Putative pyridoxine kinase (pdxK) from Staphylococcus epidermidis (strain ATCC 12228 / FDA PCI 1200).